The following is a 292-amino-acid chain: 33 kDa chaperonin (292 aa).

Intrachain disulfides connect cysteine 230–cysteine 232 and cysteine 263–cysteine 266.

This sequence belongs to the HSP33 family. In terms of processing, under oxidizing conditions two disulfide bonds are formed involving the reactive cysteines. Under reducing conditions zinc is bound to the reactive cysteines and the protein is inactive.

It localises to the cytoplasm. Functionally, redox regulated molecular chaperone. Protects both thermally unfolding and oxidatively damaged proteins from irreversible aggregation. Plays an important role in the bacterial defense system toward oxidative stress. This is 33 kDa chaperonin from Serratia proteamaculans (strain 568).